Consider the following 161-residue polypeptide: Nucleotide-binding protein Ajs_2750 (161 aa).

The protein belongs to the YajQ family.

In terms of biological role, nucleotide-binding protein. The sequence is that of Nucleotide-binding protein Ajs_2750 from Acidovorax sp. (strain JS42).